Consider the following 466-residue polypeptide: Ribulose bisphosphate carboxylase large chain (466 aa).

K5 carries the N6,N6,N6-trimethyllysine modification. Substrate is bound by residues N114 and T164. The active-site Proton acceptor is the K166. K168 contacts substrate. K192, D194, and E195 together coordinate Mg(2+). At K192 the chain carries N6-carboxylysine. The active-site Proton acceptor is H285. Substrate is bound by residues R286, H318, and S370.

The protein belongs to the RuBisCO large chain family. Type I subfamily. Heterohexadecamer of 8 large chains and 8 small chains; disulfide-linked. The disulfide link is formed within the large subunit homodimers. Mg(2+) serves as cofactor. The disulfide bond which can form in the large chain dimeric partners within the hexadecamer appears to be associated with oxidative stress and protein turnover.

The protein localises to the plastid. The protein resides in the chloroplast. It carries out the reaction 2 (2R)-3-phosphoglycerate + 2 H(+) = D-ribulose 1,5-bisphosphate + CO2 + H2O. The catalysed reaction is D-ribulose 1,5-bisphosphate + O2 = 2-phosphoglycolate + (2R)-3-phosphoglycerate + 2 H(+). In terms of biological role, ruBisCO catalyzes two reactions: the carboxylation of D-ribulose 1,5-bisphosphate, the primary event in carbon dioxide fixation, as well as the oxidative fragmentation of the pentose substrate in the photorespiration process. Both reactions occur simultaneously and in competition at the same active site. The sequence is that of Ribulose bisphosphate carboxylase large chain from Cucurbita pepo (Vegetable marrow).